The chain runs to 139 residues: MGKVNKTDREWQRELSPEEYRITRQKGTEPAFTGQYWNTKQHGTYVCRCCGAELFSSDAKYDSGCGWPSFFRPLNGSVIDEHEDLTHGMVRTEIVCHDCEAHLGHVFEDGPQPTGLRYCVNSASLQLKTQEKNDEGTYP.

The 123-residue stretch at 8–130 (DREWQRELSP…NSASLQLKTQ (123 aa)) folds into the MsrB domain. Zn(2+) is bound by residues C47, C50, C96, and C99. Residue C119 is the Nucleophile of the active site.

This sequence belongs to the MsrB Met sulfoxide reductase family. Zn(2+) serves as cofactor.

It catalyses the reaction L-methionyl-[protein] + [thioredoxin]-disulfide + H2O = L-methionyl-(R)-S-oxide-[protein] + [thioredoxin]-dithiol. The sequence is that of Peptide methionine sulfoxide reductase MsrB from Acinetobacter baumannii (strain SDF).